A 238-amino-acid chain; its full sequence is MVHLRRTLAPAWWPIPRKKGGVWVVRPSPGPHSLAYSLPLALIIRDVLKYAKTMHEARYIISRGYVKVDGVVRRDYKFPVGLMDVIEIVPTGEVYRVVPDADKYYNLLPISTEEAALKLLRVEGKTMVKGGRIQLHFHDGRNLITTLEAGKQIKTFDSVLYDLRNKAIKAHIPLKLGVNAVVIHGSNVGFSGTLYEIVWTLKRKQSVVALKKGDEVRRTILNYVMAVGSEGPVIKISP.

The S4 RNA-binding domain maps to 38–101; sequence LPLALIIRDV…GEVYRVVPDA (64 aa).

This sequence belongs to the eukaryotic ribosomal protein eS4 family.

The chain is Small ribosomal subunit protein eS4 from Pyrobaculum aerophilum (strain ATCC 51768 / DSM 7523 / JCM 9630 / CIP 104966 / NBRC 100827 / IM2).